The sequence spans 399 residues: Ribose-phosphate pyrophosphokinase 2, chloroplastic (399 aa).

The transit peptide at 1 to 32 (MAAKAAALSSSPFVSSRRLSSPAASLRARTPR) directs the protein to the chloroplast. Asp214, His216, Asp225, and Asp229 together coordinate Mg(2+). The interval 299–314 (GKVAIMVDDMIDTAGT) is binding of phosphoribosylpyrophosphate.

This sequence belongs to the ribose-phosphate pyrophosphokinase family. It depends on Mg(2+) as a cofactor.

Its subcellular location is the plastid. It localises to the chloroplast. It catalyses the reaction D-ribose 5-phosphate + ATP = 5-phospho-alpha-D-ribose 1-diphosphate + AMP + H(+). This is Ribose-phosphate pyrophosphokinase 2, chloroplastic from Oryza sativa subsp. japonica (Rice).